The sequence spans 150 residues: MAGFIGKEQHSIDEKGRFMIPARFRKLLGDGKEARAKGAIFYVMKAFDGSLELYEPEIWAEKEKGLMSLSDFNPDERMLKTMMYERLDSVEMDRQGRIALPKDFLLHAAIVKDIVIIGANVKMILWSPEKLTSMIRESGTRFQVLAGRYF.

SpoVT-AbrB domains follow at residues lysine 7–isoleucine 58 and leucine 87–lysine 130.

This sequence belongs to the MraZ family. Forms oligomers.

Its subcellular location is the cytoplasm. It localises to the nucleoid. The chain is Transcriptional regulator MraZ from Chlorobium phaeobacteroides (strain BS1).